We begin with the raw amino-acid sequence, 455 residues long: Serine--tRNA ligase (455 aa).

Position 252-254 (252-254 (TAE)) interacts with L-serine. Residues 283–285 (RKE) and Val299 each bind ATP. Glu306 lines the L-serine pocket. 370–373 (EVVS) contributes to the ATP binding site. Thr406 contributes to the L-serine binding site.

The protein belongs to the class-II aminoacyl-tRNA synthetase family. Type-1 seryl-tRNA synthetase subfamily. Homodimer. The tRNA molecule binds across the dimer.

It localises to the cytoplasm. It carries out the reaction tRNA(Ser) + L-serine + ATP = L-seryl-tRNA(Ser) + AMP + diphosphate + H(+). It catalyses the reaction tRNA(Sec) + L-serine + ATP = L-seryl-tRNA(Sec) + AMP + diphosphate + H(+). The protein operates within aminoacyl-tRNA biosynthesis; selenocysteinyl-tRNA(Sec) biosynthesis; L-seryl-tRNA(Sec) from L-serine and tRNA(Sec): step 1/1. Functionally, catalyzes the attachment of serine to tRNA(Ser). Is also able to aminoacylate tRNA(Sec) with serine, to form the misacylated tRNA L-seryl-tRNA(Sec), which will be further converted into selenocysteinyl-tRNA(Sec). This Thermococcus gammatolerans (strain DSM 15229 / JCM 11827 / EJ3) protein is Serine--tRNA ligase.